A 360-amino-acid polypeptide reads, in one-letter code: Diacylglycerol O-acyltransferase 3 (360 aa).

Residues 153-182 (KAKAMKKMTEMDSESSSSSESSDSDCDKGK) form a disordered region. [2Fe-2S] cluster contacts are provided by Cys-265, Cys-270, Cys-298, and Cys-302.

This sequence belongs to the diacylglycerol acyltransferase family. Requires [2Fe-2S] cluster as cofactor.

It carries out the reaction an acyl-CoA + a 1,2-diacyl-sn-glycerol = a triacyl-sn-glycerol + CoA. It functions in the pathway glycerolipid metabolism; triacylglycerol biosynthesis. Its function is as follows. Involved in triacylglycerol (TAG) biosynthesis. Catalyzes the acylation of the sn-3 hydroxy group of sn-1,2-diacylglycerol using acyl-CoA. May preferentially use linolenoyl-CoA as substrate and to a lesser extent linoleoyl-CoA. May contribute to the active recycling of linoleate and linolenate into TAG when seed oil breakdown is blocked. In Arabidopsis thaliana (Mouse-ear cress), this protein is Diacylglycerol O-acyltransferase 3.